Here is a 580-residue protein sequence, read N- to C-terminus: Cytochrome P450 monooxygenase helB1 (580 aa).

The disordered stretch occupies residues 1–32 (MRTYAIRPVSNRLPGPIEPKKHRRDRDNSTTG). An N-linked (GlcNAc...) asparagine glycan is attached at Asn28. A helical transmembrane segment spans residues 61-81 (FLNTISVLQVLAAIFIGALTY). Cys497 contributes to the heme binding site.

This sequence belongs to the cytochrome P450 family. It depends on heme as a cofactor.

It is found in the membrane. It participates in mycotoxin biosynthesis. Functionally, cytochrome P450 monooxygenase; part of the gene cluster that mediates the biosynthesis of helvolic acid, an antibacterial nortriterpenoid. Protostadienol synthase helA cyclizes (3S)-oxidosqualene to (17Z)-protosta-17(20),24-dien-3-beta-ol (protostadienol). The synthesis of protostadienol is followed by several steps of monooxygenation, dehydrogenation, and acyl transfer to yield the final helvolic acid. Following the cyclization to the tetracyclic protostadienol by helA, cytochrome P450 monooxygenases helB1-mediated and helB2-mediated oxidation at C-4 and C-16, acyltransferase helD2-dependent acetylation of 16-OH, oxidation of C-21 by cytochrome P450 monooxygenase helB4, and short chain dehydrogenase helC-dependent oxidative decarboxylation yield the fusidane skeleton. This intermediate is further modified in three additional steps mediated by the cytochrome P450 monooxygenase helB3, the acyltransferase helD1, and the 3-ketosteroid 1-dehydrogenase helE to give helvolic acid. Compared with the late stages in the biosynthesis of helvolic acid, enzymes involved in the early stage modifications act in a relatively strict order. The hydroxylation of C-16 by helB1 and subsequent acetylation by helD2 should occur before the helB3-mediated oxidation of C-21. C-4 demethylation in fusidane-type antibiotics proceeds in an unusual manner though it is also achieved by oxidative decarboxylation. The methyl group at C-4 beta position is oxidized by helB1 and subsequently removed by the short chain dehydrogenase helC. In Aspergillus fumigatus (strain ATCC MYA-4609 / CBS 101355 / FGSC A1100 / Af293) (Neosartorya fumigata), this protein is Cytochrome P450 monooxygenase helB1.